The sequence spans 233 residues: Large ribosomal subunit protein uL1 (233 aa).

It belongs to the universal ribosomal protein uL1 family. As to quaternary structure, part of the 50S ribosomal subunit.

In terms of biological role, binds directly to 23S rRNA. The L1 stalk is quite mobile in the ribosome, and is involved in E site tRNA release. Protein L1 is also a translational repressor protein, it controls the translation of the L11 operon by binding to its mRNA. The protein is Large ribosomal subunit protein uL1 of Shewanella sp. (strain ANA-3).